Consider the following 403-residue polypeptide: MASLQLCDGYLLFKPSVSPRFLSQRISHRLIPKASSSPPPSPSPSSSSSSLSFSRRELLYQSAAVSLSLSSIVGPARADEQLSEWERVFLPIDPGVVLLDIAFVPDEPSRGFLLGTRQTLLETKDGGSTWNPRSIPSAEEEDFNYRFNSISFKGKEGWIIGKPAILLYTADAGENWDRIPLSSQLPGDMVFIKATEDKSAEMVTDEGAIYVTSNRGYNWKAAIQETVSATLNRTVSSGISGASYYTGTFSAVNRSPDGRYVAVSSRGNFFLTWEPGQPYWQPHNRAVARRIQNMGWRADGGLWLLVRGGGLYLSKGTGITEEFEEVPVQSRGFGILDVGYRSEEEAWAAGGSGILLRTRNGGKSWNRDKAADNIAANLYAVKFVDDKKGFVLGNDGVLLRYVG.

Residues 1-53 (MASLQLCDGYLLFKPSVSPRFLSQRISHRLIPKASSSPPPSPSPSSSSSSLSF) constitute a chloroplast transit peptide. The interval 31 to 50 (IPKASSSPPPSPSPSSSSSS) is disordered. The transit peptide at 54–78 (SRRELLYQSAAVSLSLSSIVGPARA) directs the protein to the thylakoid.

Belongs to the Ycf48 family. Interacts with PAM68. In terms of tissue distribution, expression in green tissue, not roots.

It is found in the plastid. It localises to the chloroplast thylakoid lumen. Its function is as follows. Essential for photosystem II (PSII) biogenesis; required for assembly of an early intermediate in PSII assembly that includes D2 (psbD) and cytochrome b559. Has been suggested to be required for chlorophyll a binding. This Arabidopsis thaliana (Mouse-ear cress) protein is Photosystem II stability/assembly factor HCF136, chloroplastic (HCF136).